The chain runs to 317 residues: Melanocyte-stimulating hormone receptor (317 aa).

The Extracellular portion of the chain corresponds to 1-37; that stretch reads MPVQGSQRRLLGSLNSTPTATPRLGLAANQTGARCLE. N-linked (GlcNAc...) asparagine glycosylation is present at Asn-29. The chain crosses the membrane as a helical span at residues 38-63; sequence VSIPDGLFLSLGLVSLVENVLVVVAI. Residues 64 to 72 lie on the Cytoplasmic side of the membrane; it reads ARNRNLHSP. Residues 73 to 93 traverse the membrane as a helical segment; that stretch reads MYCFICCLALSDLLVSGSNML. The Extracellular segment spans residues 94-118; sequence DTAVILLLEAGALAARAAVVQQLDN. A helical membrane pass occupies residues 119–140; the sequence is VIDVITCSSMLSSLCFLGAIAV. Residues 141-163 lie on the Cytoplasmic side of the membrane; the sequence is DRYISIFYALRYHSIVTLRRARR. The helical transmembrane segment at 164–183 threads the bilayer; it reads VVAAIWVASILFSTLFIAYC. The Extracellular portion of the chain corresponds to 184-191; the sequence is DHAAVLLC. A helical transmembrane segment spans residues 192–211; sequence LVVFFLAMLVLMAVLYVHML. Residues 212–240 are Cytoplasmic-facing; it reads ARACQHAQGIAQLHKRQRPAHQGVGLKGA. The helical transmembrane segment at 241–266 threads the bilayer; the sequence is ATLTILLGIFFLCWGPFFLHLTLIVL. Residues 267–279 are Extracellular-facing; sequence CPQHPTCSCIFKN. The chain crosses the membrane as a helical span at residues 280–300; the sequence is FNLFLTLIICNAIIDPLIYAF. Over 301-317 the chain is Cytoplasmic; that stretch reads RSQELRRTLKKVLLCSW. The S-palmitoyl cysteine moiety is linked to residue Cys-315.

Belongs to the G-protein coupled receptor 1 family. Interacts with MGRN1, but does not undergo MGRN1-mediated ubiquitination; this interaction competes with GNAS-binding and thus inhibits agonist-induced cAMP production. Interacts with OPN3; the interaction results in a decrease in MC1R-mediated cAMP signaling and ultimately a decrease in melanin production in melanocytes.

It is found in the cell membrane. Its function is as follows. Receptor for MSH (alpha, beta and gamma) and ACTH. The activity of this receptor is mediated by G proteins which activate adenylate cyclase. Mediates melanogenesis, the production of eumelanin (black/brown) and phaeomelanin (red/yellow), via regulation of cAMP signaling in melanocytes. The polypeptide is Melanocyte-stimulating hormone receptor (MC1R) (Trachypithecus francoisi (Francois' leaf monkey)).